The following is a 394-amino-acid chain: Protein-glutamate methylesterase/protein-glutamine glutaminase (394 aa).

A disordered region spans residues 1-24 (MSDGFGRPPPPAPAGHPTGAAGGD). Over residues 15–24 (GHPTGAAGGD) the composition is skewed to low complexity. The Response regulatory domain maps to 27 to 145 (RVMVVDDSAV…EIGGADAFKR (119 aa)). The residue at position 78 (Asp-78) is a 4-aspartylphosphate. The CheB-type methylesterase domain maps to 191–393 (PAPAVGSVGQ…PYIRKFASRA (203 aa)). Residues Ser-211, His-238, and Asp-335 contribute to the active site.

This sequence belongs to the CheB family. In terms of processing, phosphorylated by CheA. Phosphorylation of the N-terminal regulatory domain activates the methylesterase activity.

Its subcellular location is the cytoplasm. The enzyme catalyses [protein]-L-glutamate 5-O-methyl ester + H2O = L-glutamyl-[protein] + methanol + H(+). It carries out the reaction L-glutaminyl-[protein] + H2O = L-glutamyl-[protein] + NH4(+). Functionally, involved in chemotaxis. Part of a chemotaxis signal transduction system that modulates chemotaxis in response to various stimuli. Catalyzes the demethylation of specific methylglutamate residues introduced into the chemoreceptors (methyl-accepting chemotaxis proteins or MCP) by CheR. Also mediates the irreversible deamidation of specific glutamine residues to glutamic acid. The protein is Protein-glutamate methylesterase/protein-glutamine glutaminase of Azospirillum brasilense.